The primary structure comprises 327 residues: Phosphate acyltransferase (327 aa).

Belongs to the PlsX family. Homodimer. Probably interacts with PlsY.

It is found in the cytoplasm. It carries out the reaction a fatty acyl-[ACP] + phosphate = an acyl phosphate + holo-[ACP]. It participates in lipid metabolism; phospholipid metabolism. Catalyzes the reversible formation of acyl-phosphate (acyl-PO(4)) from acyl-[acyl-carrier-protein] (acyl-ACP). This enzyme utilizes acyl-ACP as fatty acyl donor, but not acyl-CoA. In Thermotoga neapolitana (strain ATCC 49049 / DSM 4359 / NBRC 107923 / NS-E), this protein is Phosphate acyltransferase.